The primary structure comprises 72 residues: Translation initiation factor IF-1 (72 aa).

The S1-like domain occupies 1–72 (MAKEENIEMQ…SKGRIIFRAR (72 aa)).

It belongs to the IF-1 family. In terms of assembly, component of the 30S ribosomal translation pre-initiation complex which assembles on the 30S ribosome in the order IF-2 and IF-3, IF-1 and N-formylmethionyl-tRNA(fMet); mRNA recruitment can occur at any time during PIC assembly.

It is found in the cytoplasm. Functionally, one of the essential components for the initiation of protein synthesis. Stabilizes the binding of IF-2 and IF-3 on the 30S subunit to which N-formylmethionyl-tRNA(fMet) subsequently binds. Helps modulate mRNA selection, yielding the 30S pre-initiation complex (PIC). Upon addition of the 50S ribosomal subunit IF-1, IF-2 and IF-3 are released leaving the mature 70S translation initiation complex. The polypeptide is Translation initiation factor IF-1 (Colwellia psychrerythraea (strain 34H / ATCC BAA-681) (Vibrio psychroerythus)).